Consider the following 393-residue polypeptide: Putative N(4)-(beta-N-acetylglucosaminyl)-L-asparaginase GM21137 (393 aa).

The N-terminal stretch at 1 to 23 (MRTHLRASLWVLCLASTAFSILA) is a signal peptide. Disulfide bonds link cysteine 97-cysteine 102 and cysteine 196-cysteine 212. The active-site Nucleophile is the threonine 243. Substrate-binding positions include 271–274 (RVGD) and 294–297 (TGDG). Cysteines 354 and 381 form a disulfide.

The protein belongs to the Ntn-hydrolase family. As to quaternary structure, heterotetramer of two alpha and two beta chains arranged as a dimer of alpha/beta heterodimers. In terms of processing, cleaved into an alpha and beta chain by autocatalysis; this activates the enzyme. The N-terminal residue of the beta subunit is responsible for the nucleophile hydrolase activity.

It catalyses the reaction N(4)-(beta-N-acetyl-D-glucosaminyl)-L-asparagine + H2O = N-acetyl-beta-D-glucosaminylamine + L-aspartate + H(+). Its function is as follows. Cleaves the GlcNAc-Asn bond which joins oligosaccharides to the peptide of asparagine-linked glycoproteins. This chain is Putative N(4)-(beta-N-acetylglucosaminyl)-L-asparaginase GM21137, found in Drosophila sechellia (Fruit fly).